The following is a 431-amino-acid chain: Sulfide dehydrogenase [flavocytochrome c] flavoprotein chain (431 aa).

Positions Met-1–Gly-30 form a signal peptide, tat-type signal. Tyr-70 to Asn-76 provides a ligand contact to FAD. Residues Cys-191 and Cys-367 are joined by a disulfide bond.

In terms of assembly, dimer of one cytochrome and one flavoprotein. Post-translationally, predicted to be exported by the Tat system. The position of the signal peptide cleavage has been experimentally proven.

It is found in the periplasm. The enzyme catalyses hydrogen sulfide + 2 Fe(III)-[cytochrome c] = sulfur + 2 Fe(II)-[cytochrome c] + H(+). The protein is Sulfide dehydrogenase [flavocytochrome c] flavoprotein chain (fccB) of Allochromatium vinosum (strain ATCC 17899 / DSM 180 / NBRC 103801 / NCIMB 10441 / D) (Chromatium vinosum).